We begin with the raw amino-acid sequence, 247 residues long: Cytochrome c oxidase subunit 2 (247 aa).

The first 11 residues, 1-11, serve as a signal peptide directing secretion; the sequence is MLLIINNIINN. Over 12-38 the chain is Mitochondrial intermembrane; the sequence is DVPTPWGVYFQDSATPNHEGIIELHDN. The helical transmembrane segment at 39-59 threads the bilayer; that stretch reads IMFYLVLILCLVSWLLFSIVK. Over 60–78 the chain is Mitochondrial matrix; that stretch reads DGSKNPLPHKYLVHGQTIE. Residues 79 to 101 form a helical membrane-spanning segment; that stretch reads IIWTILPALVLLVIAFPSFILLY. Topologically, residues 102-247 are mitochondrial intermembrane; sequence LCDEVISPAM…KEFLTWLNEQ (146 aa). Positions 182, 217, 219, 221, 225, and 228 each coordinate Cu cation. A Mg(2+)-binding site is contributed by Glu219.

This sequence belongs to the cytochrome c oxidase subunit 2 family. As to quaternary structure, component of the cytochrome c oxidase (complex IV, CIV), a multisubunit enzyme composed of a catalytic core of 3 subunits and several supernumerary subunits. The complex exists as a monomer or a dimer and forms supercomplexes (SCs) in the inner mitochondrial membrane with ubiquinol-cytochrome c oxidoreductase (cytochrome b-c1 complex, complex III, CIII). Cu cation serves as cofactor. The signal sequence of COX2 is processed by IMP1.

Its subcellular location is the mitochondrion inner membrane. The catalysed reaction is 4 Fe(II)-[cytochrome c] + O2 + 8 H(+)(in) = 4 Fe(III)-[cytochrome c] + 2 H2O + 4 H(+)(out). Functionally, component of the cytochrome c oxidase, the last enzyme in the mitochondrial electron transport chain which drives oxidative phosphorylation. The respiratory chain contains 3 multisubunit complexes succinate dehydrogenase (complex II, CII), ubiquinol-cytochrome c oxidoreductase (cytochrome b-c1 complex, complex III, CIII) and cytochrome c oxidase (complex IV, CIV), that cooperate to transfer electrons derived from NADH and succinate to molecular oxygen, creating an electrochemical gradient over the inner membrane that drives transmembrane transport and the ATP synthase. Cytochrome c oxidase is the component of the respiratory chain that catalyzes the reduction of oxygen to water. Electrons originating from reduced cytochrome c in the intermembrane space (IMS) are transferred via the dinuclear copper A center (CU(A)) of subunit 2 and heme A of subunit 1 to the active site in subunit 1, a binuclear center (BNC) formed by heme A3 and copper B (CU(B)). The BNC reduces molecular oxygen to 2 water molecules using 4 electrons from cytochrome c in the IMS and 4 protons from the mitochondrial matrix. The chain is Cytochrome c oxidase subunit 2 (COX2) from Wickerhamomyces canadensis (Yeast).